We begin with the raw amino-acid sequence, 79 residues long: Conotoxin Vi6.3 (79 aa).

The N-terminal stretch at 1–22 (MKLTCVLIITVLFLTASQLITA) is a signal peptide. Residues 23–47 (DYSRDQRQYRAVRLGDEMRNFKGAR) constitute a propeptide that is removed on maturation. 3 cysteine pairs are disulfide-bonded: Cys49–Cys62, Cys56–Cys67, and Cys61–Cys77. Residues Pro60 and Pro63 each carry the 4-hydroxyproline modification.

This sequence belongs to the conotoxin O1 superfamily. As to expression, expressed by the venom duct.

It localises to the secreted. Functionally, ion channel inhibitor that inhibits the increase in intracellular calcium upon depolarization in DRG neurons. In vivo, both intraperitoneal and intracranial injections into mice induce hyperactivity. This Conus virgo (Virgin cone) protein is Conotoxin Vi6.3.